The following is a 773-amino-acid chain: ATP-dependent RNA helicase MAK5 (773 aa).

Residues 73 to 82 are compositionally biased toward basic and acidic residues; it reads KDSNKEKVGD. 2 disordered regions span residues 73–99 and 114–144; these read KDSN…ESEL and SAAS…VDED. The span at 83–99 shows a compositional bias: acidic residues; that stretch reads DQESVENESGSDSESEL. T135 bears the Phosphothreonine mark. S138 carries the post-translational modification Phosphoserine. A Q motif motif is present at residues 171–199; the sequence is EWTNLAPLSMTILQSLQNLNFLRPTEIQK. Residues 202 to 399 enclose the Helicase ATP-binding domain; sequence IPVIMQGVDV…SSSRQVKDRR (198 aa). 215–222 contributes to the ATP binding site; that stretch reads ASTGSGKT. A DEAD box motif is present at residues 333-336; that stretch reads DEAD. The region spanning 452 to 615 is the Helicase C-terminal domain; the sequence is DLYCYYFLTM…STDLNSRSTN (164 aa). S678 bears the Phosphoserine mark.

It belongs to the DEAD box helicase family. DDX24/MAK5 subfamily.

It is found in the nucleus. The protein localises to the nucleolus. The catalysed reaction is ATP + H2O = ADP + phosphate + H(+). In terms of biological role, ATP-binding RNA helicase involved in the biogenesis of 60S ribosomal subunits and is required for the normal formation of 25S and 5.8S rRNAs. Required for the maintenance of dsRNA killer plasmid. The chain is ATP-dependent RNA helicase MAK5 (MAK5) from Saccharomyces cerevisiae (strain ATCC 204508 / S288c) (Baker's yeast).